A 637-amino-acid chain; its full sequence is Palmitoyltransferase Hip14 (637 aa).

Residues 1 to 295 (MYQSACQAAT…SKLRHDKRLR (295 aa)) lie on the Cytoplasmic side of the membrane. 5 ANK repeats span residues 77–106 (ETVTLLHWAAINNRRDIIRYFLEKGATVDA), 111–140 (LNATPLHWATRQGHLGAVVLLMAAGADPRI), 144–173 (EGCSCIHIAAQFAHTALVAYFIAKGVDPDL), 177–207 (GGMTALMWAAWKVCALDPVRLLLTLGANPAM), and 212–242 (HGNTALHWAILARNATAISTLVLKSKASLDV). A helical membrane pass occupies residues 296–315 (WWSMVACPFTAFYLAGIVFT). The Lumenal segment spans residues 316–318 (VNT). Residues 319–341 (LYIIKFFLLGCLYSIFHTIGKAL) form a helical membrane-spanning segment. Over 342-345 (FDEH) the chain is Cytoplasmic. The chain crosses the membrane as a helical span at residues 346 to 366 (LMALLPLSVYLATKAWFYVTW). Over 367–373 (LMYIDDA) the chain is Lumenal. The chain crosses the membrane as a helical span at residues 374–394 (VSFTATVCFLISSLLLWVCFL). Over 395–472 (KSWKGDPGII…VGNCIGLKNH (78 aa)) the chain is Cytoplasmic. Residues 430-480 (SFCSGCLVRRPIRSKHCSVCDRCVARFDHHCPWVGNCIGLKNHSYFMGFLW) form the DHHC domain. Cys-460 functions as the S-palmitoyl cysteine intermediate in the catalytic mechanism. The helical transmembrane segment at 473 to 493 (SYFMGFLWMLLIMCAWMLYGG) threads the bilayer. Over 494 to 520 (SKYYVNQCNVRFDDFLGAMRAIGNCDA) the chain is Lumenal. Residues 521–541 (WVGWVMGNALLHMSWVILLTI) traverse the membrane as a helical segment. Over 542–637 (CQTYQVICLG…DGMAGDHQYV (96 aa)) the chain is Cytoplasmic.

This sequence belongs to the DHHC palmitoyltransferase family. AKR/ZDHHC17 subfamily. As to quaternary structure, interacts with dorsal-ventral patterning protein Sog. As to expression, in stage 13-15 embryos, expressed in the central nervous system. At the third instar larval stage, expressed in the ventral nerve cord and is enriched in the neuropil.

It localises to the golgi apparatus membrane. The protein resides in the presynaptic cell membrane. It carries out the reaction L-cysteinyl-[protein] + hexadecanoyl-CoA = S-hexadecanoyl-L-cysteinyl-[protein] + CoA. Functionally, probable palmitoyltransferase which is required for photoreceptor synaptic transmission and for the correct expression and localization of palmitoylated protein Csp and synaptosomal-associated protein Snap25. Probably palmitoylates Csp. Probably also palmitoylates the dorsal-ventral patterning protein Sog and promotes its secretion and activity and the stabilization of the membrane-bound form. Required for synaptic vesicle exocytosis. This chain is Palmitoyltransferase Hip14, found in Drosophila melanogaster (Fruit fly).